Here is an 89-residue protein sequence, read N- to C-terminus: UPF0237 protein Cgl1544/cg1742 (89 aa).

The 79-residue stretch at 4–82 (IMTVTGQDHT…LVIRIQSEAL (79 aa)) folds into the ACT domain.

Belongs to the UPF0237 family.

The protein is UPF0237 protein Cgl1544/cg1742 of Corynebacterium glutamicum (strain ATCC 13032 / DSM 20300 / JCM 1318 / BCRC 11384 / CCUG 27702 / LMG 3730 / NBRC 12168 / NCIMB 10025 / NRRL B-2784 / 534).